Here is a 558-residue protein sequence, read N- to C-terminus: MRSDRVKAGFERAPHRSLMRATGMTDEDLSRPFIAICNSFNEVIPGHVHLNRVAALIKEEVRKAGGTPVEFNLPGVCDGIAMGHGGMKFSLASRELIADSVETMLSAHAFDAMICIPNCDKIVPGMIMGALRCNIPTIFCSGGPMAAGMAEDGTVLDLNSVFEAVARFKAGKINEEELHSLECRACPGAGSCSGMFTANSMNCLSEVIGLALPGNGSLLATSEERKEFWKQTARRAVEMAKADGPLPRDIVTRDAIDNAFTIDMAMGGSSNTVLHTLAIAREAGVEYDLQRINDISRRTPNICKVAPSSRFHMQDVLRAGGVSAIIHEIARIPGALHLDAMTVSGKTLGETVEGCGIADETVIHPLENAYSRDGGLAILFGNLAEEGAVVKKAGVHPNMMSFRGPAVIFESQEEACEGILAGKVKSGDVVVIRNEGPKGGPGMQEMLAPTSYIMGQGLGAEVALITDGRFSGATHGACIGHISPEAAEGGLIGLLRNGDIIEYSIPDRTLNVCLSEEEIARRRADWKPTYNRVSSSWLSRYRQLATNASKGAVLRRGE.

Residue Asp-78 participates in Mg(2+) binding. Position 119 (Cys-119) interacts with [2Fe-2S] cluster. The Mg(2+) site is built by Asp-120 and Lys-121. Lys-121 carries the N6-carboxylysine modification. Cys-192 is a [2Fe-2S] cluster binding site. Residue Glu-445 participates in Mg(2+) binding. The active-site Proton acceptor is Ser-471.

It belongs to the IlvD/Edd family. Homodimer. The cofactor is [2Fe-2S] cluster. Mg(2+) is required as a cofactor.

It catalyses the reaction (2R)-2,3-dihydroxy-3-methylbutanoate = 3-methyl-2-oxobutanoate + H2O. The catalysed reaction is (2R,3R)-2,3-dihydroxy-3-methylpentanoate = (S)-3-methyl-2-oxopentanoate + H2O. It functions in the pathway amino-acid biosynthesis; L-isoleucine biosynthesis; L-isoleucine from 2-oxobutanoate: step 3/4. Its pathway is amino-acid biosynthesis; L-valine biosynthesis; L-valine from pyruvate: step 3/4. In terms of biological role, functions in the biosynthesis of branched-chain amino acids. Catalyzes the dehydration of (2R,3R)-2,3-dihydroxy-3-methylpentanoate (2,3-dihydroxy-3-methylvalerate) into 2-oxo-3-methylpentanoate (2-oxo-3-methylvalerate) and of (2R)-2,3-dihydroxy-3-methylbutanoate (2,3-dihydroxyisovalerate) into 2-oxo-3-methylbutanoate (2-oxoisovalerate), the penultimate precursor to L-isoleucine and L-valine, respectively. This is Dihydroxy-acid dehydratase from Akkermansia muciniphila (strain ATCC BAA-835 / DSM 22959 / JCM 33894 / BCRC 81048 / CCUG 64013 / CIP 107961 / Muc).